Consider the following 149-residue polypeptide: Ribonuclease H (149 aa).

An RNase H type-1 domain is found at 1 to 142; it reads MSDSVELFTD…ADQLANRGVD (142 aa). Residues Asp-10, Glu-48, Asp-70, and Asp-134 each coordinate Mg(2+).

It belongs to the RNase H family. In terms of assembly, monomer. The cofactor is Mg(2+).

The protein localises to the cytoplasm. The catalysed reaction is Endonucleolytic cleavage to 5'-phosphomonoester.. Endonuclease that specifically degrades the RNA of RNA-DNA hybrids. In Pseudomonas savastanoi pv. phaseolicola (strain 1448A / Race 6) (Pseudomonas syringae pv. phaseolicola (strain 1448A / Race 6)), this protein is Ribonuclease H.